A 154-amino-acid polypeptide reads, in one-letter code: Ribonuclease H (154 aa).

In terms of domain architecture, RNase H type-1 spans Glu-5–Asp-146. Residues Asp-14, Glu-52, Asp-74, and Asp-138 each coordinate Mg(2+).

It belongs to the RNase H family. In terms of assembly, monomer. The cofactor is Mg(2+).

Its subcellular location is the cytoplasm. The enzyme catalyses Endonucleolytic cleavage to 5'-phosphomonoester.. Its function is as follows. Endonuclease that specifically degrades the RNA of RNA-DNA hybrids. This chain is Ribonuclease H, found in Coxiella burnetii (strain RSA 331 / Henzerling II).